A 299-amino-acid polypeptide reads, in one-letter code: Probable arylamine N-acetyltransferase 2 (299 aa).

Cysteine 75 acts as the Acyl-thioester intermediate in catalysis. Catalysis depends on residues histidine 115 and aspartate 130.

This sequence belongs to the arylamine N-acetyltransferase family.

The catalysed reaction is an arylamine + acetyl-CoA = an N-acetylarylamine + CoA. The protein is Probable arylamine N-acetyltransferase 2 of Dictyostelium discoideum (Social amoeba).